The primary structure comprises 309 residues: Olfactory receptor 1A1 (309 aa).

The Extracellular portion of the chain corresponds to 1-25 (MRENNQSSTLEFILLGVTGQQEQED). Residue Asn-5 is glycosylated (N-linked (GlcNAc...) asparagine). The chain crosses the membrane as a helical span at residues 26-49 (FFYILFLFIYPITLIGNLLIVLAI). Over 50–57 (CSDVRLHN) the chain is Cytoplasmic. A helical membrane pass occupies residues 58 to 79 (PMYFLLANLSLVDIFFSSVTIP). Topologically, residues 80-100 (KMLANHLLGSKSISFGGCLTQ) are extracellular. Cys-97 and Cys-189 form a disulfide bridge. A helical transmembrane segment spans residues 101–120 (MYFMIALGNTDSYILAAMAY). The Cytoplasmic portion of the chain corresponds to 121–139 (DRAVAISRPLHYTTIMSPR). The helical transmembrane segment at 140-158 (SCIWLIAGSWVIGNANALP) threads the bilayer. Residues 159–195 (HTLLTASLSFCGNQEVANFYCDITPLLKLSCSDIHFH) lie on the Extracellular side of the membrane. A helical membrane pass occupies residues 196-218 (VKMMYLGVGIFSVPLLCIIVSYI). The Cytoplasmic segment spans residues 219–235 (RVFSTVFQVPSTKGVLK). Residues 236 to 258 (AFSTCGSHLTVVSLYYGTVMGTY) traverse the membrane as a helical segment. Residues 259–270 (FRPLTNYSLKDA) are Extracellular-facing. Asn-264 is a glycosylation site (N-linked (GlcNAc...) asparagine). A helical membrane pass occupies residues 271-290 (VITVMYTAVTPMLNPFIYSL). Topologically, residues 291 to 309 (RNRDMKAALRKLFNKRISS) are cytoplasmic.

This sequence belongs to the G-protein coupled receptor 1 family.

It localises to the cell membrane. Odorant receptor. In Homo sapiens (Human), this protein is Olfactory receptor 1A1 (OR1A1).